The chain runs to 337 residues: F-box protein At2g27310 (337 aa).

Residues 10–58 form the F-box domain; it reads DSISTLHSDIIQTQILTRLDGPTLASTATTSSYLQTLCTEEKLWQELSI.

The polypeptide is F-box protein At2g27310 (Arabidopsis thaliana (Mouse-ear cress)).